Here is a 98-residue protein sequence, read N- to C-terminus: Small ribosomal subunit protein bS20 (98 aa).

Belongs to the bacterial ribosomal protein bS20 family.

Its function is as follows. Binds directly to 16S ribosomal RNA. In Parasynechococcus marenigrum (strain WH8102), this protein is Small ribosomal subunit protein bS20.